Here is a 367-residue protein sequence, read N- to C-terminus: Putative threonine-phosphate decarboxylase (367 aa).

Residues 12 to 13 (HG), asparagine 29, and asparagine 152 each bind O-phospho-L-threonine. Lysine 213 carries the post-translational modification N6-(pyridoxal phosphate)lysine. Positions 320 and 334 each coordinate O-phospho-L-threonine.

It belongs to the class-II pyridoxal-phosphate-dependent aminotransferase family. Pyridoxal 5'-phosphate serves as cofactor.

The enzyme catalyses O-phospho-L-threonine + H(+) = (R)-1-aminopropan-2-yl phosphate + CO2. It participates in cofactor biosynthesis; adenosylcobalamin biosynthesis. Decarboxylates L-threonine-O-3-phosphate to yield (R)-1-amino-2-propanol O-2-phosphate, the precursor for the linkage between the nucleotide loop and the corrin ring in cobalamin. The protein is Putative threonine-phosphate decarboxylase (cobD) of Caldanaerobacter subterraneus subsp. tengcongensis (strain DSM 15242 / JCM 11007 / NBRC 100824 / MB4) (Thermoanaerobacter tengcongensis).